A 238-amino-acid chain; its full sequence is ATP synthase subunit a (238 aa).

A run of 5 helical transmembrane segments spans residues leucine 18–alanine 38, tyrosine 75–methionine 95, asparagine 112–isoleucine 132, valine 179–phenylalanine 199, and isoleucine 203–leucine 223.

It belongs to the ATPase A chain family. As to quaternary structure, F-type ATPases have 2 components, CF(1) - the catalytic core - and CF(0) - the membrane proton channel. CF(1) has five subunits: alpha(3), beta(3), gamma(1), delta(1), epsilon(1). CF(0) has three main subunits: a(1), b(2) and c(9-12). The alpha and beta chains form an alternating ring which encloses part of the gamma chain. CF(1) is attached to CF(0) by a central stalk formed by the gamma and epsilon chains, while a peripheral stalk is formed by the delta and b chains.

Its subcellular location is the cell membrane. Its function is as follows. Key component of the proton channel; it plays a direct role in the translocation of protons across the membrane. This is ATP synthase subunit a from Streptococcus agalactiae serotype III (strain NEM316).